Reading from the N-terminus, the 624-residue chain is Alpha-amylase 1 (624 aa).

An N-terminal signal peptide occupies residues 1–28; it reads MLLINFFIAVLGVISLSPIVVARYILRR. Positions 40–133 constitute a CBM21 domain; sequence ESVTGSNHVQ…SDTSVTYTTS (94 aa). A disulfide bond links Cys-177 and Cys-185. Trp-230 lines the substrate pocket. Asn-268 is a binding site for Ca(2+). Residue His-269 participates in substrate binding. Cys-297 and Cys-311 are oxidised to a cystine. Asn-304 carries N-linked (GlcNAc...) asparagine glycosylation. Ca(2+) is bound by residues Glu-309 and Asp-322. Asn-344 carries an N-linked (GlcNAc...) asparagine glycan. A substrate-binding site is contributed by Arg-351. Residues Asp-353, His-357, and Glu-377 each coordinate Ca(2+). The active-site Nucleophile is the Asp-353. 356–357 is a substrate binding site; the sequence is KH. Glu-377 serves as the catalytic Proton donor. Gly-381 serves as a coordination point for substrate. Cysteines 387 and 430 form a disulfide. Asp-444 and Arg-491 together coordinate substrate. Cys-587 and Cys-622 are joined by a disulfide.

This sequence belongs to the glycosyl hydrolase 13 family. The cofactor is Ca(2+).

Its subcellular location is the secreted. It catalyses the reaction Endohydrolysis of (1-&gt;4)-alpha-D-glucosidic linkages in polysaccharides containing three or more (1-&gt;4)-alpha-linked D-glucose units.. This is Alpha-amylase 1 (LKA1) from Lipomyces kononenkoae (Yeast).